The primary structure comprises 199 residues: Recombination protein RecR (199 aa).

The segment at 57-72 (CEICGNLDTKSICHIC) adopts a C4-type zinc-finger fold. One can recognise a Toprim domain in the interval 80–175 (STIAIVETVA…KISRLASGIP (96 aa)).

This sequence belongs to the RecR family.

May play a role in DNA repair. It seems to be involved in an RecBC-independent recombinational process of DNA repair. It may act with RecF and RecO. The sequence is that of Recombination protein RecR from Rickettsia prowazekii (strain Madrid E).